Here is a 286-residue protein sequence, read N- to C-terminus: Pantothenate synthetase (286 aa).

Position 30 to 37 (30 to 37) interacts with ATP; sequence MGNLHAGH. The active-site Proton donor is H37. Residue Q61 coordinates (R)-pantoate. Position 61 (Q61) interacts with beta-alanine. Residue 149-152 participates in ATP binding; sequence GQKD. Q155 is a binding site for (R)-pantoate. Residues V178 and 186–189 contribute to the ATP site; that span reads LSSR.

It belongs to the pantothenate synthetase family. In terms of assembly, homodimer.

Its subcellular location is the cytoplasm. The catalysed reaction is (R)-pantoate + beta-alanine + ATP = (R)-pantothenate + AMP + diphosphate + H(+). It functions in the pathway cofactor biosynthesis; (R)-pantothenate biosynthesis; (R)-pantothenate from (R)-pantoate and beta-alanine: step 1/1. Functionally, catalyzes the condensation of pantoate with beta-alanine in an ATP-dependent reaction via a pantoyl-adenylate intermediate. This chain is Pantothenate synthetase, found in Stutzerimonas stutzeri (strain A1501) (Pseudomonas stutzeri).